The chain runs to 122 residues: Large ribosomal subunit protein uL14 (122 aa).

The protein belongs to the universal ribosomal protein uL14 family. In terms of assembly, part of the 50S ribosomal subunit. Forms a cluster with proteins L3 and L19. In the 70S ribosome, L14 and L19 interact and together make contacts with the 16S rRNA in bridges B5 and B8.

Binds to 23S rRNA. Forms part of two intersubunit bridges in the 70S ribosome. The sequence is that of Large ribosomal subunit protein uL14 from Afipia carboxidovorans (strain ATCC 49405 / DSM 1227 / KCTC 32145 / OM5) (Oligotropha carboxidovorans).